The sequence spans 613 residues: DNA repair and telomere maintenance protein nbs1 (613 aa).

The FHA domain occupies 23–86 (YIVGRNVSDD…FGTKVNEKVV (64 aa)). BRCT domains lie at 107–186 (FTIN…YLST) and 228–302 (GFSC…KIII). The residue at position 355 (Ser355) is a Phosphoserine. Disordered regions lie at residues 381-428 (KEPE…GQGK) and 546-613 (TEVF…KFHF). Residues 387–399 (LSNQSNNGSAQNK) are compositionally biased toward polar residues. Basic and acidic residues predominate over residues 400–409 (KSGDNSEKTK). Low complexity predominate over residues 574–592 (SSDKSGKSSISKKSSNSFK). The short motif at 611 to 613 (FHF) is the FxF/Y motif element.

Belongs to the Nibrin family. Component of the MRN complex composed of two heterodimers rad32 and rad50 associated with a single nbs1. Interacts with (phosphorylated) ctp1/CtIP. Interacts (via FxF/Y motif) with tel1/atm.

The protein localises to the nucleus. It is found in the chromosome. It localises to the telomere. Its function is as follows. Component of the MRN complex, which plays a central role in double-strand break (DSB) repair, DNA recombination, maintenance of telomere integrity and meiosis. The MRN complex is involved in the repair of DNA double-strand breaks (DSBs) via homologous recombination (HR), an error-free mechanism which primarily occurs during S and G2 phases. The complex (1) mediates the end resection of damaged DNA, which generates proper single-stranded DNA, a key initial steps in HR, and is (2) required for the recruitment of other repair factors and efficient activation of tel1/atm upon DNA damage. The MRN complex possesses single-strand endonuclease activity and double-strand-specific 3'-5' exonuclease activity, which are provided by MRE11, to initiate end resection, which is required for single-strand invasion and recombination. Within the MRN complex, nbs1 acts as a protein-protein adapter, which specifically recognizes and binds phosphorylated proteins, promoting their recruitment to DNA damage sites. Recruits rad32 and rad50 components of the MRN complex to DSBs in response to DNA damage. Promotes the recruitment of tel1/atm to the DNA damage sites, activating tel1/atm function. Mediates the recruitment of phosphorylated ctp1/CtIP to DSBs, leading to cooperation between the MRN complex and ctp1/CtIP to initiate end resection. This Schizosaccharomyces pombe (strain 972 / ATCC 24843) (Fission yeast) protein is DNA repair and telomere maintenance protein nbs1.